The following is a 186-amino-acid chain: HGPRTase-like protein 3 (186 aa).

It belongs to the purine/pyrimidine phosphoribosyltransferase family. Archaeal HPRT subfamily.

In terms of biological role, may catalyze a purine salvage reaction, the substrate is unknown. In Haloterrigena turkmenica (strain ATCC 51198 / DSM 5511 / JCM 9101 / NCIMB 13204 / VKM B-1734 / 4k) (Halococcus turkmenicus), this protein is HGPRTase-like protein 3.